Consider the following 978-residue polypeptide: Transcription factor MYCGRDRAFT_87993 (978 aa).

2 consecutive C2H2-type zinc fingers follow at residues 2 to 24 and 30 to 52; these read VFCTYCGQSFTRDEHLERHILTH and FKCFTCHMSFARRDLLQRHYTVH. A DNA-binding region (zn(2)-C6 fungal-type) is located at residues 79 to 105; sequence CSNCAKTKTKCDKKFPCSRCAGRNLRC. 2 disordered regions span residues 113–231 and 426–445; these read ASKN…SPRF and THREGRGTSNGSHSPNPSGA. Low complexity predominate over residues 152–165; the sequence is SSSPSSQKSGTPIS. Residues 432–445 are compositionally biased toward polar residues; the sequence is GTSNGSHSPNPSGA.

The protein localises to the nucleus. In terms of biological role, transcription factor; part of the gene cluster 29 that mediates the biosynthesis of dihydroxynaphthalene (DHN)-melanin, a bluish-green pigment forming a dark layer in the conidial wall that protects the conidia from UV radiations. This Zymoseptoria tritici (strain CBS 115943 / IPO323) (Speckled leaf blotch fungus) protein is Transcription factor MYCGRDRAFT_87993.